A 217-amino-acid chain; its full sequence is Large ribosomal subunit protein uL1 (217 aa).

It belongs to the universal ribosomal protein uL1 family.

The chain is Large ribosomal subunit protein uL1 (RPL10A) from Candida glabrata (strain ATCC 2001 / BCRC 20586 / JCM 3761 / NBRC 0622 / NRRL Y-65 / CBS 138) (Yeast).